Reading from the N-terminus, the 226-residue chain is MNKLETNNNQYWLDRWQNDDVGFCQESPNEFLVKHFSKLNINDSSVCLIPMCGCSIDMLFFLSKGVKVVGIELSEKAVLSFFSQNSINYEVIHGNDYKLYKGDDIEIYVADIFNLPKIANNLPAFDIWYDRGAYIALPNDLRTNYAKMMLEVCPNNTQILLLVMEHDKKSQTPPYSVTQAELIKNFSAKIKFELIDSKQRDNIPDYRKAEGMTKQYYTTYLRKKQY.

Residues Trp-16, Met-51, Glu-72, and Arg-131 each contribute to the S-adenosyl-L-methionine site.

This sequence belongs to the class I-like SAM-binding methyltransferase superfamily. TPMT family.

The protein resides in the cytoplasm. It carries out the reaction S-adenosyl-L-methionine + a thiopurine = S-adenosyl-L-homocysteine + a thiopurine S-methylether.. This is Thiopurine S-methyltransferase from Francisella tularensis subsp. novicida (strain U112).